The following is a 382-amino-acid chain: 1-deoxy-D-xylulose 5-phosphate reductoisomerase (382 aa).

NADPH is bound by residues Thr-10, Gly-11, Ser-12, Ile-13, Asn-38, and Asn-120. Lys-121 serves as a coordination point for 1-deoxy-D-xylulose 5-phosphate. Glu-122 contacts NADPH. Asp-146 contributes to the Mn(2+) binding site. Residues Ser-147, Glu-148, Ser-172, and His-195 each coordinate 1-deoxy-D-xylulose 5-phosphate. Glu-148 contributes to the Mn(2+) binding site. NADPH is bound at residue Gly-201. Ser-208, Asn-213, Lys-214, and Glu-217 together coordinate 1-deoxy-D-xylulose 5-phosphate. Position 217 (Glu-217) interacts with Mn(2+).

This sequence belongs to the DXR family. Requires Mg(2+) as cofactor. It depends on Mn(2+) as a cofactor.

The catalysed reaction is 2-C-methyl-D-erythritol 4-phosphate + NADP(+) = 1-deoxy-D-xylulose 5-phosphate + NADPH + H(+). It functions in the pathway isoprenoid biosynthesis; isopentenyl diphosphate biosynthesis via DXP pathway; isopentenyl diphosphate from 1-deoxy-D-xylulose 5-phosphate: step 1/6. Catalyzes the NADPH-dependent rearrangement and reduction of 1-deoxy-D-xylulose-5-phosphate (DXP) to 2-C-methyl-D-erythritol 4-phosphate (MEP). This is 1-deoxy-D-xylulose 5-phosphate reductoisomerase from Thermoanaerobacter pseudethanolicus (strain ATCC 33223 / 39E) (Clostridium thermohydrosulfuricum).